The primary structure comprises 259 residues: 5'-nucleotidase SurE (259 aa).

A divalent metal cation-binding residues include Asp13, Asp14, Ser44, and Asn100.

Belongs to the SurE nucleotidase family. The cofactor is a divalent metal cation.

Its subcellular location is the cytoplasm. It carries out the reaction a ribonucleoside 5'-phosphate + H2O = a ribonucleoside + phosphate. In terms of biological role, nucleotidase that shows phosphatase activity on nucleoside 5'-monophosphates. This Bacteroides thetaiotaomicron (strain ATCC 29148 / DSM 2079 / JCM 5827 / CCUG 10774 / NCTC 10582 / VPI-5482 / E50) protein is 5'-nucleotidase SurE.